A 165-amino-acid polypeptide reads, in one-letter code: PARP-type zinc finger-containing protein C13F5.07c (165 aa).

The PARP-type; degenerate zinc-finger motif lies at 8–100; sequence YRIEIAPNNR…KVVDAINEGH (93 aa). Positions 100–114 are enriched in basic and acidic residues; that stretch reads HVSESDERESRKLGE. The interval 100 to 165 is disordered; that stretch reads HVSESDERES…TDGSEAYEDD (66 aa). The segment covering 117–128 has biased composition (polar residues); it reads NVNSQKLKTSSP. The segment covering 131–141 has biased composition (basic residues); sequence VVRKNKRHHTT. Residues 149 to 165 show a composition bias toward acidic residues; it reads SDLDAEFTDGSEAYEDD.

The protein resides in the cytoplasm. It localises to the nucleus. This chain is PARP-type zinc finger-containing protein C13F5.07c, found in Schizosaccharomyces pombe (strain 972 / ATCC 24843) (Fission yeast).